Here is a 239-residue protein sequence, read N- to C-terminus: Fatty acid metabolism regulator protein (239 aa).

Residues Gln6–Phe74 enclose the HTH gntR-type domain. Residues Glu34 to Gln53 constitute a DNA-binding region (H-T-H motif).

Homodimer.

The protein resides in the cytoplasm. In terms of biological role, multifunctional regulator of fatty acid metabolism. The chain is Fatty acid metabolism regulator protein from Escherichia fergusonii (strain ATCC 35469 / DSM 13698 / CCUG 18766 / IAM 14443 / JCM 21226 / LMG 7866 / NBRC 102419 / NCTC 12128 / CDC 0568-73).